Consider the following 432-residue polypeptide: Enolase (432 aa).

Gln166 is a binding site for (2R)-2-phosphoglycerate. The active-site Proton donor is the Glu210. Residues Asp247, Glu288, and Asp315 each coordinate Mg(2+). Residues Lys340, Arg369, Ser370, and Lys391 each contribute to the (2R)-2-phosphoglycerate site. Residue Lys340 is the Proton acceptor of the active site.

It belongs to the enolase family. Requires Mg(2+) as cofactor.

It localises to the cytoplasm. The protein resides in the secreted. It is found in the cell surface. The catalysed reaction is (2R)-2-phosphoglycerate = phosphoenolpyruvate + H2O. Its pathway is carbohydrate degradation; glycolysis; pyruvate from D-glyceraldehyde 3-phosphate: step 4/5. Catalyzes the reversible conversion of 2-phosphoglycerate (2-PG) into phosphoenolpyruvate (PEP). It is essential for the degradation of carbohydrates via glycolysis. This chain is Enolase, found in Aeropyrum pernix (strain ATCC 700893 / DSM 11879 / JCM 9820 / NBRC 100138 / K1).